We begin with the raw amino-acid sequence, 185 residues long: MILVIGLGNPGKEYQYTRHNIGFIAIEKIANQYNSSFSIKKKFNCEIAETISDGQKIIFIKPTTYMNLSGKSVISVKTYYNIQSAKIFVIHDDIDLETGRIKFKTGGGNGGHNGLKSIDGVIGNNYNRIRVGVGRPQNNQDVADYVLNNFLKSEYETALQAIDRIANNFDLILENKLEEFKNKIV.

TRNA is bound at residue Tyr-14. The Proton acceptor role is filled by His-19. TRNA contacts are provided by Tyr-65, Asn-67, and Asn-113.

It belongs to the PTH family. Monomer.

It localises to the cytoplasm. It carries out the reaction an N-acyl-L-alpha-aminoacyl-tRNA + H2O = an N-acyl-L-amino acid + a tRNA + H(+). In terms of biological role, hydrolyzes ribosome-free peptidyl-tRNAs (with 1 or more amino acids incorporated), which drop off the ribosome during protein synthesis, or as a result of ribosome stalling. Functionally, catalyzes the release of premature peptidyl moieties from peptidyl-tRNA molecules trapped in stalled 50S ribosomal subunits, and thus maintains levels of free tRNAs and 50S ribosomes. The polypeptide is Peptidyl-tRNA hydrolase (Rickettsia felis (strain ATCC VR-1525 / URRWXCal2) (Rickettsia azadi)).